Here is a 120-residue protein sequence, read N- to C-terminus: Peptidyl-tRNA hydrolase (120 aa).

The protein belongs to the PTH2 family. As to quaternary structure, homodimer.

Its subcellular location is the cytoplasm. It catalyses the reaction an N-acyl-L-alpha-aminoacyl-tRNA + H2O = an N-acyl-L-amino acid + a tRNA + H(+). Its function is as follows. The natural substrate for this enzyme may be peptidyl-tRNAs which drop off the ribosome during protein synthesis. The sequence is that of Peptidyl-tRNA hydrolase from Saccharolobus solfataricus (strain ATCC 35092 / DSM 1617 / JCM 11322 / P2) (Sulfolobus solfataricus).